Here is a 167-residue protein sequence, read N- to C-terminus: Small ribosomal subunit protein uS5 (167 aa).

An S5 DRBM domain is found at 12–75; the sequence is LQEKLITVNR…EQARRNMITI (64 aa).

It belongs to the universal ribosomal protein uS5 family. In terms of assembly, part of the 30S ribosomal subunit. Contacts proteins S4 and S8.

With S4 and S12 plays an important role in translational accuracy. Its function is as follows. Located at the back of the 30S subunit body where it stabilizes the conformation of the head with respect to the body. The sequence is that of Small ribosomal subunit protein uS5 from Buchnera aphidicola subsp. Acyrthosiphon pisum (strain APS) (Acyrthosiphon pisum symbiotic bacterium).